The primary structure comprises 291 residues: Probable protein S-acyltransferase 12 (291 aa).

2 helical membrane-spanning segments follow: residues 14 to 34 and 49 to 69; these read GYFMILLVVAVVGVSYYAVVV and LSALAALIIFVFHFLLIMLLW. Residues 111-161 form the DHHC domain; the sequence is GYCTKCRNVKPPRCHHCSVCQRCVLKMDHHCVWIVNCVGARNYKFFLLFLF. Cys-141 acts as the S-palmitoyl cysteine intermediate in catalysis. Transmembrane regions (helical) follow at residues 155 to 175 and 198 to 218; these read FFLLFLFYTFLETMLDVIVLL and LVLAFVLNFAFVLSLLCFVVM.

The protein belongs to the DHHC palmitoyltransferase family.

The protein localises to the cell membrane. The enzyme catalyses L-cysteinyl-[protein] + hexadecanoyl-CoA = S-hexadecanoyl-L-cysteinyl-[protein] + CoA. Palmitoyl acyltransferase. This Arabidopsis thaliana (Mouse-ear cress) protein is Probable protein S-acyltransferase 12 (PAT12).